Consider the following 515-residue polypeptide: Aldehyde dehydrogenase tropH (515 aa).

Residue 238–243 coordinates NAD(+); that stretch reads GSVATG. Glu-260 (proton acceptor) is an active-site residue. Cys-295 functions as the Nucleophile in the catalytic mechanism.

This sequence belongs to the aldehyde dehydrogenase family.

The catalysed reaction is an aldehyde + NAD(+) + H2O = a carboxylate + NADH + 2 H(+). It participates in secondary metabolite biosynthesis. Its function is as follows. Aldehyde dehydrogenase; part of the gene cluster that mediates the biosynthesis of the tropolone class of fungal maleic anhydrides. The pathway begins with the synthesis of 3-methylorcinaldehyde by the non-reducing polyketide synthase (PKS) tropA. 3-methylorcinaldehyde is the substrate for the FAD-dependent monooxygenase tropB to yield a dearomatized hydroxycyclohexadione. The 2-oxoglutarate-dependent dioxygenase tropC then performs the oxidative ring expansion to provide the first tropolone metabolite stipitaldehyde. Trop D converts stipitaldehyde into stipitacetal which is in turn converted to stipitalide by the short-chain dehydrogenase/reductase tropE. The next steps involve tropF, tropG, tropH, tropI and tropJ to form successive tropolone maleic anhydrides including stipitaldehydic, stipitatonic and stipitatic acids. The protein is Aldehyde dehydrogenase tropH of Talaromyces stipitatus (strain ATCC 10500 / CBS 375.48 / QM 6759 / NRRL 1006) (Penicillium stipitatum).